Consider the following 123-residue polypeptide: Large ribosomal subunit protein uL14 (123 aa).

It belongs to the universal ribosomal protein uL14 family. In terms of assembly, part of the 50S ribosomal subunit. Forms a cluster with proteins L3 and L19. In the 70S ribosome, L14 and L19 interact and together make contacts with the 16S rRNA in bridges B5 and B8.

Its function is as follows. Binds to 23S rRNA. Forms part of two intersubunit bridges in the 70S ribosome. The chain is Large ribosomal subunit protein uL14 from Vibrio parahaemolyticus serotype O3:K6 (strain RIMD 2210633).